The chain runs to 176 residues: NAD(P)H-quinone oxidoreductase subunit 6, chloroplastic (176 aa).

The next 5 membrane-spanning stretches (helical) occupy residues 10–30 (ILVL…VLLT), 33–53 (IYSA…YFLL), 60–80 (VAQL…AVMF), 95–115 (IGDG…MTTI), and 152–172 (FYLP…GAIT).

This sequence belongs to the complex I subunit 6 family. In terms of assembly, NDH is composed of at least 16 different subunits, 5 of which are encoded in the nucleus.

The protein localises to the plastid. It localises to the chloroplast thylakoid membrane. The catalysed reaction is a plastoquinone + NADH + (n+1) H(+)(in) = a plastoquinol + NAD(+) + n H(+)(out). The enzyme catalyses a plastoquinone + NADPH + (n+1) H(+)(in) = a plastoquinol + NADP(+) + n H(+)(out). NDH shuttles electrons from NAD(P)H:plastoquinone, via FMN and iron-sulfur (Fe-S) centers, to quinones in the photosynthetic chain and possibly in a chloroplast respiratory chain. The immediate electron acceptor for the enzyme in this species is believed to be plastoquinone. Couples the redox reaction to proton translocation, and thus conserves the redox energy in a proton gradient. The protein is NAD(P)H-quinone oxidoreductase subunit 6, chloroplastic (ndhG) of Zea mays (Maize).